Consider the following 332-residue polypeptide: Ribosomal RNA small subunit methyltransferase C (332 aa).

It belongs to the methyltransferase superfamily. RsmC family. In terms of assembly, monomer.

Its subcellular location is the cytoplasm. The enzyme catalyses guanosine(1207) in 16S rRNA + S-adenosyl-L-methionine = N(2)-methylguanosine(1207) in 16S rRNA + S-adenosyl-L-homocysteine + H(+). Functionally, specifically methylates the guanine in position 1207 of 16S rRNA in the 30S particle. In Pseudomonas entomophila (strain L48), this protein is Ribosomal RNA small subunit methyltransferase C.